Reading from the N-terminus, the 362-residue chain is 2-aminoethylphosphonate--pyruvate transaminase (362 aa).

N6-(pyridoxal phosphate)lysine is present on K193.

This sequence belongs to the class-V pyridoxal-phosphate-dependent aminotransferase family. PhnW subfamily. In terms of assembly, homodimer. Pyridoxal 5'-phosphate is required as a cofactor.

The enzyme catalyses (2-aminoethyl)phosphonate + pyruvate = phosphonoacetaldehyde + L-alanine. Functionally, involved in phosphonate degradation. The sequence is that of 2-aminoethylphosphonate--pyruvate transaminase from Bacteroides fragilis (strain YCH46).